The chain runs to 185 residues: MLEYISSLPKQPISEEEKEGLIEMREEEKLARDVYLTLYNKWKLQIFKNIAESEQTHMDAVKYLLEKYNIPDPVKNDSIGVFSNPKFEELYKKLVEKGDKSEVDALKVGATIEDLDIADLEKWINKTDNEDIKFVYENLMKGSRNHMRAFVRMLNNYGSNYTPQYISKEEYEEIISSSTERGMNR.

This is an uncharacterized protein from Methanocaldococcus jannaschii (strain ATCC 43067 / DSM 2661 / JAL-1 / JCM 10045 / NBRC 100440) (Methanococcus jannaschii).